A 105-amino-acid chain; its full sequence is Heat shock protein HspQ (105 aa).

Residues glycine 75 to asparagine 105 form a disordered region.

This sequence belongs to the HspQ family.

It localises to the cytoplasm. In terms of biological role, involved in the degradation of certain denaturated proteins, including DnaA, during heat shock stress. The polypeptide is Heat shock protein HspQ (Serratia proteamaculans (strain 568)).